Reading from the N-terminus, the 154-residue chain is Deoxyuridine 5'-triphosphate nucleotidohydrolase (154 aa).

Residues 72–74 (RSG), Asn85, 89–91 (LID), and Met99 contribute to the substrate site.

It belongs to the dUTPase family. Requires Mg(2+) as cofactor.

It carries out the reaction dUTP + H2O = dUMP + diphosphate + H(+). It functions in the pathway pyrimidine metabolism; dUMP biosynthesis; dUMP from dCTP (dUTP route): step 2/2. This enzyme is involved in nucleotide metabolism: it produces dUMP, the immediate precursor of thymidine nucleotides and it decreases the intracellular concentration of dUTP so that uracil cannot be incorporated into DNA. The protein is Deoxyuridine 5'-triphosphate nucleotidohydrolase of Psychrobacter cryohalolentis (strain ATCC BAA-1226 / DSM 17306 / VKM B-2378 / K5).